Here is a 350-residue protein sequence, read N- to C-terminus: Spermidine/putrescine import ATP-binding protein PotA (350 aa).

The ABC transporter domain maps to 6-236 (LELRNISKQY…PENLWTAQFI (231 aa)). 38–45 (GPSGCGKT) lines the ATP pocket.

Belongs to the ABC transporter superfamily. Spermidine/putrescine importer (TC 3.A.1.11.1) family. The complex is composed of two ATP-binding proteins (PotA), two transmembrane proteins (PotB and PotC) and a solute-binding protein (PotD).

Its subcellular location is the cell membrane. The enzyme catalyses ATP + H2O + polyamine-[polyamine-binding protein]Side 1 = ADP + phosphate + polyamineSide 2 + [polyamine-binding protein]Side 1.. Functionally, part of the ABC transporter complex PotABCD involved in spermidine/putrescine import. Responsible for energy coupling to the transport system. The sequence is that of Spermidine/putrescine import ATP-binding protein PotA from Spiroplasma citri.